Consider the following 337-residue polypeptide: 1-aminocyclopropane-1-carboxylate deaminase (337 aa).

Lysine 50 carries the N6-(pyridoxal phosphate)lysine modification. The active-site Nucleophile is serine 77.

This sequence belongs to the ACC deaminase/D-cysteine desulfhydrase family. As to quaternary structure, homotrimer. The cofactor is pyridoxal 5'-phosphate.

The catalysed reaction is 1-aminocyclopropane-1-carboxylate + H2O = 2-oxobutanoate + NH4(+). In terms of biological role, catalyzes a cyclopropane ring-opening reaction, the irreversible conversion of 1-aminocyclopropane-1-carboxylate (ACC) to ammonia and alpha-ketobutyrate. Allows growth on ACC as a nitrogen source. This chain is 1-aminocyclopropane-1-carboxylate deaminase, found in Rhizobium radiobacter (Agrobacterium tumefaciens).